A 460-amino-acid chain; its full sequence is A-type ATP synthase subunit B (460 aa).

This sequence belongs to the ATPase alpha/beta chains family. In terms of assembly, has multiple subunits with at least A(3), B(3), C, D, E, F, H, I and proteolipid K(x).

Its subcellular location is the cell membrane. Functionally, component of the A-type ATP synthase that produces ATP from ADP in the presence of a proton gradient across the membrane. The B chain is a regulatory subunit. This Methanosarcina barkeri (strain Fusaro / DSM 804) protein is A-type ATP synthase subunit B.